The chain runs to 849 residues: Membrane protein-large ribosomal subunit bL9 fusion protein (849 aa).

Residues 1 to 680 (MFSKNKHNTK…TQLEGTNIKT (680 aa)) form a unknown region. A run of 2 helical transmembrane segments spans residues 11–31 (FIVIACVIVVLILILFCFDFQ) and 64–84 (IIFFIFNFFGKIILASFIISF). The region spanning 214 to 342 (KTLAIAMIAF…GGDQVVVNIE (129 aa)) is the GGDEF domain. A large ribosomal subunit protein bL9 region spans residues 681–849 (VTDTLKHFLK…FLNVTERKSK (169 aa)).

The protein belongs to the bacterial ribosomal protein bL9 family.

It localises to the cell membrane. In terms of biological role, binds to the 23S rRNA. The chain is Membrane protein-large ribosomal subunit bL9 fusion protein from Aster yellows witches'-broom phytoplasma (strain AYWB).